The chain runs to 154 residues: uncharacterized protein (154 aa).

The signal sequence occupies residues 1–21; it reads MSISSGSFAQPAAVVSSPGVT.

It belongs to the ivy family.

It localises to the periplasm. This is an uncharacterized protein from Yersinia pestis.